Reading from the N-terminus, the 166-residue chain is Large ribosomal subunit protein uL10 (166 aa).

Belongs to the universal ribosomal protein uL10 family. In terms of assembly, part of the ribosomal stalk of the 50S ribosomal subunit. The N-terminus interacts with L11 and the large rRNA to form the base of the stalk. The C-terminus forms an elongated spine to which L12 dimers bind in a sequential fashion forming a multimeric L10(L12)X complex.

Forms part of the ribosomal stalk, playing a central role in the interaction of the ribosome with GTP-bound translation factors. This is Large ribosomal subunit protein uL10 from Streptococcus pneumoniae (strain ATCC 700669 / Spain 23F-1).